A 372-amino-acid polypeptide reads, in one-letter code: Cytochrome b (372 aa).

Transmembrane regions (helical) follow at residues 25 to 45, 69 to 90, 105 to 125, and 170 to 190; these read FGSM…FLAI, WTMQ…YIHI, WLSG…GYVL, and FFAL…IHII. Heme b-binding residues include His75 and His89. 2 residues coordinate heme b: His174 and His188. Residue His193 participates in a ubiquinone binding. A run of 4 helical transmembrane segments spans residues 218-238, 280-300, 312-332, and 339-358; these read YKDM…LSFS, LGGT…PFTH, LTQI…WTAT, and FIII…IMNP.

It belongs to the cytochrome b family. As to quaternary structure, the cytochrome bc1 complex contains 3 respiratory subunits (MT-CYB, CYC1 and UQCRFS1), 2 core proteins (UQCRC1 and UQCRC2) and probably 6 low-molecular weight proteins. Heme b is required as a cofactor.

The protein resides in the mitochondrion inner membrane. In terms of biological role, component of the ubiquinol-cytochrome c reductase complex (complex III or cytochrome b-c1 complex) that is part of the mitochondrial respiratory chain. The b-c1 complex mediates electron transfer from ubiquinol to cytochrome c. Contributes to the generation of a proton gradient across the mitochondrial membrane that is then used for ATP synthesis. The polypeptide is Cytochrome b (MT-CYB) (Ophiophagus hannah (King cobra)).